Reading from the N-terminus, the 1905-residue chain is Microtubule cross-linking factor 1 (1905 aa).

The segment at 1 to 249 is necessary for colocalization and binding with microtubules; the sequence is METLNGPAGG…SSDREPPRGA (249 aa). The interval 1–329 is disordered; the sequence is METLNGPAGG…SLGEQSRLVP (329 aa). A necessary for self-assembly, microtubule bundling activity and apicobasal microtubule organization region spans residues 1 to 508; that stretch reads METLNGPAGG…QDDSADLRCQ (508 aa). The span at 22–40 shows a compositional bias: basic residues; the sequence is QHHRHHHLHPVAERRRLHR. Composition is skewed to low complexity over residues 63–95 and 115–130; these read VPSS…AAPG and AGAR…LGSR. Ser77 and Ser87 each carry phosphoserine. Phosphoserine is present on residues Ser217, Ser221, and Ser263. The span at 268-283 shows a compositional bias: low complexity; sequence ALLAAPLAAGACPGGR. 3 coiled-coil regions span residues 330–404, 432–483, and 513–718; these read AAEE…EQKS, SVRL…SSLK, and KEEA…LQHE. Disordered regions lie at residues 544 to 563, 601 to 631, 671 to 694, 737 to 800, and 842 to 867; these read YGDV…PSTR, DMRG…LESS, FEPP…GAPL, LRAP…SEPC, and AGLR…GDQQ. At Ser549 the chain carries Phosphoserine. The span at 601–616 shows a compositional bias: basic and acidic residues; sequence DMRGQQEREGPGRDHA. Ser618 carries the phosphoserine modification. Position 621 is a phosphothreonine (Thr621). Over residues 680–692 the composition is skewed to gly residues; sequence LGEGASPGAGGGA. A Phosphoserine modification is found at Ser685. Positions 741 to 770 are enriched in basic and acidic residues; it reads SPRDSDAESDAGKKESDGEESRLPQPKREG. Ser776 carries the post-translational modification Phosphoserine. The segment covering 857–866 has biased composition (acidic residues); the sequence is GEEEQGEGDQ. Phosphoserine occurs at positions 901, 923, 941, and 975. The segment at 1080–1100 is disordered; the sequence is GVQGGHQADGPDHDSDRGCGF. 2 coiled-coil regions span residues 1143–1201 and 1238–1278; these read KALL…ELGS and EKNW…KENS. Positions 1265–1382 are necessary for interaction with MARK2 and apicobasal microtubule bundle formation in polarized epithelial cells; the sequence is EFLWRIEQLQ…EENHKGNLQR (118 aa). Ser1278 carries the phosphoserine modification. Residues 1346-1384 are disordered; the sequence is ALSLDDEPEEPPAHRPEREFRNRLPEEEENHKGNLQRAV. Positions 1356-1377 are enriched in basic and acidic residues; that stretch reads PPAHRPEREFRNRLPEEEENHK. Phosphoserine occurs at positions 1385, 1388, and 1399. Thr1417 carries the post-translational modification Phosphothreonine. Ser1421 bears the Phosphoserine mark. Phosphotyrosine is present on Tyr1427. The tract at residues 1485 to 1505 is disordered; sequence DTMTSPEHCQKQPLRSHVLTE. Phosphoserine occurs at positions 1514, 1523, 1561, 1578, 1583, 1592, and 1661. The disordered stretch occupies residues 1524–1569; the sequence is ITAAGGEGPFPTSRARGSPGDTKGGPPEPMLSRWPCTSPRHSRDYV. 4 disordered regions span residues 1655 to 1689, 1707 to 1756, 1782 to 1842, and 1863 to 1905; these read GSGV…SRQV, PKYG…PVHT, GLRA…APPG, and KEER…PWGL. Phosphothreonine is present on residues Thr1667 and Thr1675. Low complexity predominate over residues 1678–1687; that stretch reads SSPSRSLRSR. Residues 1678–1773 are necessary for colocalization and binding with microtubules; it reads SSPSRSLRSR…SLFNIIDHSP (96 aa). Residues Ser1679 and Ser1683 each carry the phosphoserine modification. Residues 1744–1756 show a composition bias toward polar residues; sequence ARSTTTRESPVHT. Ser1791, Ser1808, Ser1812, and Ser1814 each carry phosphoserine.

Belongs to the SOGA family. In terms of assembly, homodimer. Associates (via N- and C-terminus domains) with microtubule filaments. As to quaternary structure, interacts with MARK2; the interaction is direct. In terms of processing, phosphorylated during mitosis in a CDK1-dependent manner.

It localises to the lateral cell membrane. The protein localises to the apical cell membrane. The protein resides in the cytoplasm. Its subcellular location is the cytoskeleton. It is found in the spindle pole. It localises to the midbody. In terms of biological role, microtubule-associated factor involved in the late phase of epithelial polarization and microtubule dynamics regulation. Plays a role in the development and maintenance of non-centrosomal microtubule bundles at the lateral membrane in polarized epithelial cells. Required for faithful chromosome segregation during mitosis. This chain is Microtubule cross-linking factor 1 (MTCL1), found in Homo sapiens (Human).